Reading from the N-terminus, the 682-residue chain is Inactive protein-arginine deiminase type-6 (682 aa).

A phosphoserine mark is found at serine 2 and serine 434.

This sequence belongs to the protein arginine deiminase family. As to quaternary structure, homodimers. Associates with alpha-tubulin. Phosphorylation at Ser-2, possibly by RSK-type kinases, and Ser-434 creates binding sites for 14-3-3 proteins. As to expression, expressed at very high levels in oocytes. Weakly expressed in testis. Expressed in primordial, primary, secondary and Graafian follicles, and in immature oocytes, mature eggs and blastocyst (at protein level).

It is found in the cytoplasm. Its subcellular location is the nucleus. The protein localises to the cytoplasmic vesicle. It localises to the secretory vesicle. The protein resides in the cortical granule. In terms of biological role, structural constituent of cytoplasmic lattices, which plays a key role in early embryonic development. Cytoplasmic lattices consist in fibrous structures found in the cytoplasm of oocytes and preimplantation embryos. They are required to store maternal proteins critical for embryonic development, such as ribosomal proteins and proteins that control epigenetic reprogramming of the preimplantation embryo, and prevent their degradation or activation. In contrast to other members of the family, does not show protein-arginine deiminase activity due to its inability to bind Ca(2+). The chain is Inactive protein-arginine deiminase type-6 from Mus musculus (Mouse).